The chain runs to 690 residues: Translation factor GUF1, mitochondrial (690 aa).

Positions Ser-40–Ser-68 are disordered. Over residues Thr-52–Ser-68 the composition is skewed to low complexity. A tr-type G domain is found at Glu-89–Val-272. Residues Ala-98–Ser-105, Asp-165–His-169, and Asn-219–Asp-222 contribute to the GTP site.

Belongs to the TRAFAC class translation factor GTPase superfamily. Classic translation factor GTPase family. LepA subfamily.

The protein localises to the mitochondrion inner membrane. It carries out the reaction GTP + H2O = GDP + phosphate + H(+). Promotes mitochondrial protein synthesis. May act as a fidelity factor of the translation reaction, by catalyzing a one-codon backward translocation of tRNAs on improperly translocated ribosomes. Binds to mitochondrial ribosomes in a GTP-dependent manner. This Sordaria macrospora (strain ATCC MYA-333 / DSM 997 / K(L3346) / K-hell) protein is Translation factor GUF1, mitochondrial.